The chain runs to 599 residues: Serine/threonine-protein kinase Nek1 (599 aa).

The Protein kinase domain maps to 4–258 (YEVLEQIGKG…AAELLKHPHL (255 aa)). Residues 10-18 (IGKGAFGSA) and lysine 33 contribute to the ATP site. The Proton acceptor role is filled by aspartate 129. 3 disordered regions span residues 364-386 (SIVK…EPPK), 461-482 (SEDP…PQHC), and 504-542 (DDDD…DTSS). Over residues 511–530 (DSSSGRNNAAAAASSRAGSS) the composition is skewed to low complexity.

It belongs to the protein kinase superfamily. NEK Ser/Thr protein kinase family. NIMA subfamily. Expressed in anthers, pistils and leaves.

It catalyses the reaction L-seryl-[protein] + ATP = O-phospho-L-seryl-[protein] + ADP + H(+). It carries out the reaction L-threonyl-[protein] + ATP = O-phospho-L-threonyl-[protein] + ADP + H(+). Functionally, may be involved in plant development processes. This chain is Serine/threonine-protein kinase Nek1, found in Oryza sativa subsp. japonica (Rice).